The sequence spans 63 residues: Sarcotoxin-1A (63 aa).

The signal sequence occupies residues 1–23 (MNFQNIFIFVALILAVFAGQSQA). R62 is subject to Arginine amide.

The protein belongs to the cecropin family.

The protein resides in the secreted. In terms of biological role, sarcotoxins, which are potent bactericidal proteins, are produced in response to injury. They are cytotoxic to both Gram-positive and Gram-negative bacteria. In Sarcophaga peregrina (Flesh fly), this protein is Sarcotoxin-1A.